Consider the following 921-residue polypeptide: Phototropin-1A (921 aa).

Positions methionine 1–glycine 11 are enriched in gly residues. 2 disordered regions span residues methionine 1–leucine 59 and threonine 88–alanine 118. A compositionally biased stretch (low complexity) spans serine 40–alanine 51. Polar residues predominate over residues arginine 97–alanine 117. The PAS 1 domain occupies valine 123 to serine 197. FMN-binding positions include asparagine 172–glutamine 177, arginine 190, asparagine 205, asparagine 215, and glutamine 236. At cysteine 173 the chain carries S-4a-FMN cysteine. In terms of domain architecture, PAC 1 spans serine 197 to valine 251. Positions arginine 286 to threonine 295 are enriched in polar residues. Disordered regions lie at residues arginine 286–arginine 347 and serine 364–glutamate 390. Basic and acidic residues-rich tracts occupy residues proline 312 to serine 321 and serine 364 to aspartate 376. Residues arginine 400–glutamine 473 form the PAS 2 domain. FMN is bound by residues asparagine 449 to glutamine 454, arginine 467, asparagine 482, asparagine 492, and glutamine 513. Position 450 is an S-4a-FMN cysteine (cysteine 450). A PAC 2 domain is found at alanine 474–glycine 528. Residues phenylalanine 594–phenylalanine 881 enclose the Protein kinase domain. Residues leucine 600–valine 608 and lysine 623 contribute to the ATP site. Aspartate 719 functions as the Proton acceptor in the catalytic mechanism.

It belongs to the protein kinase superfamily. Ser/Thr protein kinase family. In terms of assembly, homodimer. Requires FMN as cofactor. Post-translationally, autophosphorylated in response to blue light irradiation. 2 molecules of FMN bind covalently to cysteines after exposure to blue light and are reversed in the dark. In terms of tissue distribution, highly expressed in coleoptiles of dark-grown seedlings.

The enzyme catalyses L-seryl-[protein] + ATP = O-phospho-L-seryl-[protein] + ADP + H(+). It catalyses the reaction L-threonyl-[protein] + ATP = O-phospho-L-threonyl-[protein] + ADP + H(+). In terms of biological role, protein kinase that acts as a blue light photoreceptor in a signal-transduction pathway for phototropic responses. Regulates a wide range of physiological activities in plants that maximize the efficiency of photosynthesis, such as chloroplast relocations, stomata opening, and leaf expansion. The polypeptide is Phototropin-1A (PHOT1A) (Oryza sativa subsp. japonica (Rice)).